The chain runs to 178 residues: GTP-dependent dephospho-CoA kinase (178 aa).

GTP contacts are provided by aspartate 55, valine 57, aspartate 74, lysine 76, and glutamate 127.

Belongs to the GTP-dependent DPCK family.

It carries out the reaction 3'-dephospho-CoA + GTP = GDP + CoA + H(+). Its pathway is cofactor biosynthesis; coenzyme A biosynthesis. Catalyzes the GTP-dependent phosphorylation of the 3'-hydroxyl group of dephosphocoenzyme A to form coenzyme A (CoA). The polypeptide is GTP-dependent dephospho-CoA kinase (Saccharolobus islandicus (strain Y.G.57.14 / Yellowstone #1) (Sulfolobus islandicus)).